A 1082-amino-acid polypeptide reads, in one-letter code: Neisserial autotransporter lipoprotein NalP (1082 aa).

The signal sequence occupies residues 1 to 27; the sequence is MRTTPTFPTKTFKPTAMALAVATTLSA. The N-palmitoyl cysteine moiety is linked to residue Cys28. Residue Cys28 is the site of S-diacylglycerol cysteine attachment. Residues 110 to 482 enclose the Peptidase S8 domain; sequence NDAYKNLINL…WGLLDAGKAM (373 aa). Residues Asp138, His210, and Ser426 each act as charge relay system in the active site. Positions 808-1082 constitute an Autotransporter domain; sequence DGLDHNGTGL…SGRVGVGYRF (275 aa).

The protein belongs to the peptidase S8 family. Post-translationally, probably auto-processes to yield a 68-70 kDa form and a C-terminal 30 kDa translocator domain; upon overexpression in situ and in E.coli full-length protein is seen as well as (probably) auto-processed forms of 68-70 kDa and 30 kDa in size, suggesting this may have protease activity.

The protein localises to the cell outer membrane. It is found in the cell surface. It localises to the secreted. Its subcellular location is the host cytoplasm. The protein resides in the host perinuclear region. Cleavage of host complement factor C3 is inhibited by PMSF. Functionally, major human immunogenic protein, detected in patients recovering from meningitidis. Autotransporter with a secreted protease domain involved in processing other autotransporter proteins including App, IgA, LbpB and NHBA. Probably autoprocesses to release the about 70 kDa passenger domain. Both cell surface protein (Neisserial autotransporter lipoprotein NalP) and the passenger domain cleave human (host) complement factor C3, generating a shorter alpha chain and a longer beta chain than normal. Uptake of a passenger domain fragment (residues 101-784) by human cells increases cell metabolic activity; the serine protease activity is required for this increase. In terms of biological role, cleaves human (host) complement factor C3, generating a shorter alpha chain and a longer beta chain than normal. Does not act on mouse or rabbit C3. Cleavage causes C3b degradation by human CFI and CFH, and thus decreases deposition of C3b on the bacteria surface and probably facilitates complement escape. Plays a role in extracellular-DNA (eDNA) mediated biofilm formation. In some strains (including cc32 strain MC58) eDNA stimulates biofilm formation. When NalP is not expressed (and no longer processes NHBA or IgA) biofilm formation increases. The sequence is that of Neisserial autotransporter lipoprotein NalP from Neisseria meningitidis serogroup B (strain ATCC BAA-335 / MC58).